The sequence spans 331 residues: uncharacterized protein (331 aa).

43–50 (GANESGKS) provides a ligand contact to ATP.

This is an uncharacterized protein from Methanocaldococcus jannaschii (strain ATCC 43067 / DSM 2661 / JAL-1 / JCM 10045 / NBRC 100440) (Methanococcus jannaschii).